The sequence spans 655 residues: RNA-binding protein EWS (655 aa).

The interval 1 to 285 (MASTDYSTYS…GVYGQESGGF (285 aa)) is EAD (Gln/Pro/Thr-rich). 31 repeat units span residues 8–16 (TYSQAAAQQ), 17–27 (GYSAYTAQPTQ), 28–34 (GYAQTTQ), 35–42 (AYGQQSYG), 43–50 (TYGQPTDV), 51–59 (SYTQAQTTA), 60–68 (TYGQTAYAT), 69–75 (SYGQPPT), 76–84 (GYSTPTAPQ), 85–91 (AYSQPVQ), 92–110 (GYGTGTYDSTTATVTTTQA), 111–116 (SYAAQT), 117–125 (AYGTQPAYP), 126–156 (TYGQQPTATAPTRPQDGNKPAETSQPQSSTG), 157–163 (GYNQPSL), 164–170 (GYGQSNY), 171–177 (SYPQVPG), 178–188 (SYPMQPVTAPP), 189–193 (SYPPT), 194–201 (SYSSSQPT), 202–206 (SYDQS), 207–212 (SYSQQN), 213–218 (TYGQPS), 219–224 (SYGQQS), 225–230 (SYGQQS), 231–238 (SYGQQPPT), 239–245 (SYPPQTG), 246–252 (SYSQAPS), 253–259 (QYSQQSS), 260–276 (SYGQQSSFRQDHPSSMG), and 277–285 (VYGQESGGF). The 31 X approximate tandem repeats stretch occupies residues 8–285 (TYSQAAAQQG…GVYGQESGGF (278 aa)). Positions 121-350 (QPAYPTYGQQ…EGPDLDLGLP (230 aa)) are disordered. Polar residues-rich tracts occupy residues 127–137 (YGQQPTATAPT) and 146–172 (AETSQPQSSTGGYNQPSLGYGQSNYSY). Positions 192 to 266 (PTSYSSSQPT…QSSSYGQQSS (75 aa)) are enriched in low complexity. Positions 256–285 (QQSSSYGQQSSFRQDHPSSMGVYGQESGGF) constitute an IQ domain. Residue serine 266 is modified to Phosphoserine; by PKC. 7 positions are modified to asymmetric dimethylarginine: arginine 300, arginine 302, arginine 304, arginine 309, arginine 314, arginine 317, and arginine 321. Residues 308-334 (DRGGMSRGGRGGGRGGLGAGERGGFNK) show a composition bias toward gly residues. The span at 335–350 (PGGPMDEGPDLDLGLP) shows a compositional bias: low complexity. The RRM domain maps to 360–446 (SAIYVQGLND…SKLKVSLARK (87 aa)). Residue lysine 438 is modified to N6-acetyllysine. Disordered stretches follow at residues 447–524 (KPPM…WQCP) and 544–655 (APKP…DRPY). 2 positions are modified to asymmetric dimethylarginine: arginine 454 and arginine 463. The residue at position 470 (arginine 470) is an Asymmetric dimethylarginine; alternate. Arginine 470 carries the post-translational modification Omega-N-methylarginine; alternate. The segment covering 471-489 (GGPGGPGGPGGPMGRMGGR) has biased composition (gly residues). Arginine 485 carries the omega-N-methylarginine modification. Arginine 489 is subject to Asymmetric dimethylarginine; by PRMT8. Arginine 493, arginine 499, and arginine 502 each carry asymmetric dimethylarginine. Arginine 505 bears the Asymmetric dimethylarginine; alternate mark. Arginine 505 is subject to Omega-N-methylarginine; alternate. The segment at 517 to 548 (RAGDWQCPNPGCGNQNFAWRTECNQCKAPKPE) adopts a RanBP2-type zinc-finger fold. Over residues 550 to 559 (FLPPPFPPPG) the composition is skewed to pro residues. Asymmetric dimethylarginine is present on residues arginine 562 and arginine 564. Residues 565 to 590 (GGPGGMRGGRGGLMDRGGPGGMFRGG) are compositionally biased toward gly residues. Arginine 571 bears the Asymmetric dimethylarginine; alternate; by PRMT8 mark. The residue at position 571 (arginine 571) is an Omega-N-methylarginine; alternate; by PRMT8. Asymmetric dimethylarginine occurs at positions 574, 580, 588, and 591. Over residues 591–605 (RGGDRGGFRGGRGMD) the composition is skewed to basic and acidic residues. At arginine 595 the chain carries Asymmetric dimethylarginine; alternate; by PRMT8. Arginine 595 carries the post-translational modification Omega-N-methylarginine; alternate; by PRMT8. Residue arginine 599 is modified to Asymmetric dimethylarginine. An Asymmetric dimethylarginine; by PRMT8 modification is found at arginine 602. Residue arginine 606 is modified to Asymmetric dimethylarginine; alternate; by PRMT8. Omega-N-methylarginine; alternate; by PRMT8 is present on arginine 606. Residues 606-617 (RGGFGGGRRGGP) are compositionally biased toward gly residues. An Asymmetric dimethylarginine; alternate modification is found at arginine 614. Arginine 614 carries the post-translational modification Omega-N-methylarginine; alternate. Asymmetric dimethylarginine occurs at positions 632 and 635. The short motif at 638–655 (PGKMDKGEHRQERRDRPY) is the Nuclear localization signal element. Positions 640–655 (KMDKGEHRQERRDRPY) are enriched in basic and acidic residues.

This sequence belongs to the RRM TET family. As to quaternary structure, binds RNA, POLR2C, SF1 and calmodulin. Interacts with PTK2B and TDRD3. Forms a complex with REC8, PRDM9, SYCP3 and SYCP1; complex formation is dependent of phosphorylated form of REC8 and requires PRDM9 bound to hotspot DNA; EWSR1 joins PRDM9 with the chromosomal axis through REC8. Phosphorylated; calmodulin-binding inhibits phosphorylation of Ser-266. Post-translationally, highly methylated on arginine residues. Methylation is mediated by PRMT1 and, at lower level by PRMT8.

Its subcellular location is the nucleus. It localises to the cytoplasm. The protein resides in the cell membrane. In terms of biological role, binds to ssRNA containing the consensus sequence 5'-AGGUAA-3'. Might function as a transcriptional repressor. This chain is RNA-binding protein EWS (Ewsr1), found in Mus musculus (Mouse).